Here is a 210-residue protein sequence, read N- to C-terminus: MTQPNTQTTPNDVPAAAEGQHQEQQQQQRRGGGRERRGGGRRGDRRGQERDSEWQERVVQIRRVSKTVKGGKKMSFRAIVVVGNERGQVGVGVGKAGDVIGAVRKGVADGKKHLVKVPLTRHNSIPTLSNGREGAANVLIRPAAPGTGVIAGGSIRTVLELAGIKNVLAKRLGSKTPLNNARAAMVALASLRTHKETAKERGISLEQIYS.

Residues 1–11 show a composition bias toward polar residues; it reads MTQPNTQTTPN. The segment at 1–56 is disordered; it reads MTQPNTQTTPNDVPAAAEGQHQEQQQQQRRGGGRERRGGGRRGDRRGQERDSEWQE. The segment covering 18-29 has biased composition (low complexity); that stretch reads EGQHQEQQQQQR. Positions 32–56 are enriched in basic and acidic residues; sequence GGRERRGGGRRGDRRGQERDSEWQE. One can recognise an S5 DRBM domain in the interval 54–117; the sequence is WQERVVQIRR…ADGKKHLVKV (64 aa).

It belongs to the universal ribosomal protein uS5 family. In terms of assembly, part of the 30S ribosomal subunit. Contacts proteins S4 and S8.

With S4 and S12 plays an important role in translational accuracy. In terms of biological role, located at the back of the 30S subunit body where it stabilizes the conformation of the head with respect to the body. The chain is Small ribosomal subunit protein uS5 from Prochlorococcus marinus (strain MIT 9303).